A 196-amino-acid chain; its full sequence is MQLKRVAEAKLPTPWGDFLMVGFEELATGHDHVALVYGDISEHTPVLARVHSECLTGDALFSLRCDCGFQLEAALTQIAEEGRGILLYHRQEGRNIGLLNKIRAYALQDQGYDTVEANHQLGFAADERDFTLCADMFKLLGVNEVRLLTNNPKKVEILTEAGINIVERVPLIVGRNPNNEHYLDTKAEKMGHLLNK.

Residue 49–53 (RVHSE) participates in GTP binding. 3 residues coordinate Zn(2+): Cys54, Cys65, and Cys67. Residues Gln70, 92-94 (EGR), and Thr114 each bind GTP. The active-site Proton acceptor is Asp126. Arg128 functions as the Nucleophile in the catalytic mechanism. Positions 149 and 154 each coordinate GTP.

Belongs to the GTP cyclohydrolase II family. In terms of assembly, homodimer. It depends on Zn(2+) as a cofactor.

It carries out the reaction GTP + 4 H2O = 2,5-diamino-6-hydroxy-4-(5-phosphoribosylamino)-pyrimidine + formate + 2 phosphate + 3 H(+). It functions in the pathway cofactor biosynthesis; riboflavin biosynthesis; 5-amino-6-(D-ribitylamino)uracil from GTP: step 1/4. In terms of biological role, catalyzes the conversion of GTP to 2,5-diamino-6-ribosylamino-4(3H)-pyrimidinone 5'-phosphate (DARP), formate and pyrophosphate. This Shigella boydii serotype 18 (strain CDC 3083-94 / BS512) protein is GTP cyclohydrolase-2.